Here is a 301-residue protein sequence, read N- to C-terminus: Fructokinase (301 aa).

H165, C181, H184, and C187 together coordinate Zn(2+).

Belongs to the ROK (NagC/XylR) family. It depends on Mg(2+) as a cofactor.

The catalysed reaction is D-fructose + ATP = D-fructose 6-phosphate + ADP + H(+). Its activity is regulated as follows. Inhibition by zinc ions. The chain is Fructokinase (frk) from Zymomonas mobilis subsp. mobilis (strain ATCC 31821 / ZM4 / CP4).